A 141-amino-acid chain; its full sequence is Nucleoside diphosphate kinase (141 aa).

Residues K11, F59, R87, T93, R104, and N114 each contribute to the ATP site. The active-site Pros-phosphohistidine intermediate is H117.

It belongs to the NDK family. In terms of assembly, homotetramer. It depends on Mg(2+) as a cofactor.

It is found in the cytoplasm. The enzyme catalyses a 2'-deoxyribonucleoside 5'-diphosphate + ATP = a 2'-deoxyribonucleoside 5'-triphosphate + ADP. It carries out the reaction a ribonucleoside 5'-diphosphate + ATP = a ribonucleoside 5'-triphosphate + ADP. Major role in the synthesis of nucleoside triphosphates other than ATP. The ATP gamma phosphate is transferred to the NDP beta phosphate via a ping-pong mechanism, using a phosphorylated active-site intermediate. The polypeptide is Nucleoside diphosphate kinase (Laribacter hongkongensis (strain HLHK9)).